The following is a 164-amino-acid chain: NADH-quinone oxidoreductase subunit I (164 aa).

2 4Fe-4S ferredoxin-type domains span residues 54–84 and 95–124; these read LRRY…IEAG and VRYD…EGPN. Positions 64, 67, 70, 74, 104, 107, 110, and 114 each coordinate [4Fe-4S] cluster.

The protein belongs to the complex I 23 kDa subunit family. As to quaternary structure, NDH-1 is composed of 14 different subunits. Subunits NuoA, H, J, K, L, M, N constitute the membrane sector of the complex. [4Fe-4S] cluster is required as a cofactor.

It localises to the cell inner membrane. The enzyme catalyses a quinone + NADH + 5 H(+)(in) = a quinol + NAD(+) + 4 H(+)(out). In terms of biological role, NDH-1 shuttles electrons from NADH, via FMN and iron-sulfur (Fe-S) centers, to quinones in the respiratory chain. The immediate electron acceptor for the enzyme in this species is believed to be ubiquinone. Couples the redox reaction to proton translocation (for every two electrons transferred, four hydrogen ions are translocated across the cytoplasmic membrane), and thus conserves the redox energy in a proton gradient. The polypeptide is NADH-quinone oxidoreductase subunit I (Mesorhizobium japonicum (strain LMG 29417 / CECT 9101 / MAFF 303099) (Mesorhizobium loti (strain MAFF 303099))).